The sequence spans 752 residues: Kaurene synthase like 2, chloroplastic (752 aa).

The transit peptide at 1–28 (MSLLLSNSALVGPKFRSSRISHASASLD) directs the protein to the chloroplast. Mg(2+) is bound by residues D538, D542, N682, and E690. Positions 538–542 (DDLFD) match the DDXXD motif motif.

The protein belongs to the terpene synthase family. Mg(2+) serves as cofactor. In terms of tissue distribution, highly expressed in leaves.

The protein localises to the plastid. The protein resides in the chloroplast. The protein operates within secondary metabolite biosynthesis; terpenoid biosynthesis. In terms of biological role, involved in the biosynthesis of ent-kaurene diterpenoids natural products such as oridonin, miltiradiene, eriocalyxin B and nezukol, known to exhibit antitumor, anti-inflammatory and antibacterial activities. Catalyzes the conversion of ent-copalyl diphosphate (ent-CPP) to ent-isopimaradiene like compounds. The sequence is that of Kaurene synthase like 2, chloroplastic from Isodon rubescens (Rabdosia rubescens).